We begin with the raw amino-acid sequence, 293 residues long: Membrane protein RL13 (293 aa).

An N-terminal signal peptide occupies residues 1-19 (MHWHLAITWTVIILTFSEC). A helical membrane pass occupies residues 245–265 (IPLGIHAVWAGIVVSVALIAL).

Its subcellular location is the virion membrane. In terms of biological role, may play a role in modifying tropism or in modulating cell signaling during virus entry. Since RL13 expression severely impairs HCMV replication in epithelial cell cultures, it may act as a regulator promoting persistence by suppressing the switch to fully lytic infection. The sequence is that of Membrane protein RL13 (RL13) from Human cytomegalovirus (strain Merlin) (HHV-5).